A 617-amino-acid polypeptide reads, in one-letter code: Chaperone protein DnaK (617 aa).

A disordered region spans residues 579-617 (KAQQEAQQASGEAGSADARGPDETVVDADYEVVDDEKRK). The span at 580–594 (AQQEAQQASGEAGSA) shows a compositional bias: low complexity. Acidic residues predominate over residues 602 to 617 (TVVDADYEVVDDEKRK).

It belongs to the heat shock protein 70 family.

In terms of biological role, acts as a chaperone. The sequence is that of Chaperone protein DnaK from Methanosarcina acetivorans (strain ATCC 35395 / DSM 2834 / JCM 12185 / C2A).